A 325-amino-acid polypeptide reads, in one-letter code: Small ribosomal subunit protein RACK1 (325 aa).

7 WD repeats span residues 5–48 (QMKL…WDVD), 58–99 (IGRP…WDLN), 100–141 (QGVS…WNTL), 143–186 (QCKY…WNLG), 187–227 (NCRL…LWDL), 228–268 (NEGK…WDLE), and 269–320 (DKKE…YQVS).

Belongs to the WD repeat G protein beta family. Ribosomal protein RACK1 subfamily.

In terms of biological role, required for the expression of antimicrobial peptide nlp-29 in response to fungal infection or physical injury. The chain is Small ribosomal subunit protein RACK1 (rack-1) from Caenorhabditis elegans.